We begin with the raw amino-acid sequence, 645 residues long: Acetyl-coenzyme A synthetase (645 aa).

CoA is bound by residues 190-193 and Thr309; that span reads RGGR. Residues 385 to 387, 409 to 414, Asp498, and Arg513 each bind ATP; these read GEP and DTWWQT. Ser521 lines the CoA pocket. Residue Arg524 participates in ATP binding. 3 residues coordinate Mg(2+): Val535, His537, and Val540. Arg582 lines the CoA pocket. Lys607 carries the N6-acetyllysine modification.

This sequence belongs to the ATP-dependent AMP-binding enzyme family. The cofactor is Mg(2+). In terms of processing, acetylated. Deacetylation by the SIR2-homolog deacetylase activates the enzyme.

The catalysed reaction is acetate + ATP + CoA = acetyl-CoA + AMP + diphosphate. Catalyzes the conversion of acetate into acetyl-CoA (AcCoA), an essential intermediate at the junction of anabolic and catabolic pathways. AcsA undergoes a two-step reaction. In the first half reaction, AcsA combines acetate with ATP to form acetyl-adenylate (AcAMP) intermediate. In the second half reaction, it can then transfer the acetyl group from AcAMP to the sulfhydryl group of CoA, forming the product AcCoA. The chain is Acetyl-coenzyme A synthetase from Methylocella silvestris (strain DSM 15510 / CIP 108128 / LMG 27833 / NCIMB 13906 / BL2).